Reading from the N-terminus, the 223-residue chain is Ion-translocating oxidoreductase complex subunit E (223 aa).

The next 7 membrane-spanning stretches (helical) occupy residues 17 to 37 (SLVQ…TINA), 38 to 58 (IGLG…ISIL), 68 to 88 (IPIY…LLHA), 91 to 111 (FNLY…CIVV), 124 to 144 (VISF…MFVI), 156 to 176 (FLFG…FTFI), and 181 to 201 (TIIL…VIAF).

The protein belongs to the NqrDE/RnfAE family. As to quaternary structure, the complex is composed of six subunits: RnfA, RnfB, RnfC, RnfD, RnfE and RnfG.

It localises to the cell inner membrane. Its function is as follows. Part of a membrane-bound complex that couples electron transfer with translocation of ions across the membrane. In Buchnera aphidicola subsp. Schizaphis graminum (strain Sg), this protein is Ion-translocating oxidoreductase complex subunit E.